The following is a 180-amino-acid chain: Large ribosomal subunit protein uL15 (180 aa).

A disordered region spans residues 1–62 (MKKERLEQAA…KTAGRGSKGQ (62 aa)). Positions 35-44 (GAKKEKKRVG) are enriched in basic residues.

It belongs to the universal ribosomal protein uL15 family. In terms of assembly, part of the 50S ribosomal subunit.

Binds to the 23S rRNA. In Leptospira borgpetersenii serovar Hardjo-bovis (strain JB197), this protein is Large ribosomal subunit protein uL15.